The chain runs to 89 residues: MANSPQAKKRARQNEKNRKHNASLRSMARTYMKKVDAKIKAGNHDEAQAALKEAQPIMDSMVNKGIFAKNKIARHKSRLNAKIKALKSA.

Positions 1–26 (MANSPQAKKRARQNEKNRKHNASLRS) are disordered. Residues 7–22 (AKKRARQNEKNRKHNA) show a composition bias toward basic residues.

Belongs to the bacterial ribosomal protein bS20 family.

Its function is as follows. Binds directly to 16S ribosomal RNA. This chain is Small ribosomal subunit protein bS20, found in Marinobacter nauticus (strain ATCC 700491 / DSM 11845 / VT8) (Marinobacter aquaeolei).